Here is a 365-residue protein sequence, read N- to C-terminus: Chorismate synthase (365 aa).

Over residues 41–51 (IQKELDRRRPG) the composition is skewed to basic and acidic residues. A disordered region spans residues 41 to 62 (IQKELDRRRPGQSEVSTPRSEA). Arg-48 serves as a coordination point for NADP(+). FMN contacts are provided by residues 125-127 (RSS), Gly-285, 300-304 (KPTPS), and Arg-327.

The protein belongs to the chorismate synthase family. Requires FMNH2 as cofactor.

The enzyme catalyses 5-O-(1-carboxyvinyl)-3-phosphoshikimate = chorismate + phosphate. The protein operates within metabolic intermediate biosynthesis; chorismate biosynthesis; chorismate from D-erythrose 4-phosphate and phosphoenolpyruvate: step 7/7. Functionally, catalyzes the anti-1,4-elimination of the C-3 phosphate and the C-6 proR hydrogen from 5-enolpyruvylshikimate-3-phosphate (EPSP) to yield chorismate, which is the branch point compound that serves as the starting substrate for the three terminal pathways of aromatic amino acid biosynthesis. This reaction introduces a second double bond into the aromatic ring system. The chain is Chorismate synthase from Methanosarcina mazei (strain ATCC BAA-159 / DSM 3647 / Goe1 / Go1 / JCM 11833 / OCM 88) (Methanosarcina frisia).